Reading from the N-terminus, the 597-residue chain is Arginine--tRNA ligase (597 aa).

The short motif at 125 to 135 (PNTNKPLHLGH) is the 'HIGH' region element.

Belongs to the class-I aminoacyl-tRNA synthetase family. As to quaternary structure, monomer.

Its subcellular location is the cytoplasm. The enzyme catalyses tRNA(Arg) + L-arginine + ATP = L-arginyl-tRNA(Arg) + AMP + diphosphate. The polypeptide is Arginine--tRNA ligase (Bacteroides thetaiotaomicron (strain ATCC 29148 / DSM 2079 / JCM 5827 / CCUG 10774 / NCTC 10582 / VPI-5482 / E50)).